Here is a 163-residue protein sequence, read N- to C-terminus: Protein-export protein SecB (163 aa).

Belongs to the SecB family. In terms of assembly, homotetramer, a dimer of dimers. One homotetramer interacts with 1 SecA dimer.

Its subcellular location is the cytoplasm. Its function is as follows. One of the proteins required for the normal export of preproteins out of the cell cytoplasm. It is a molecular chaperone that binds to a subset of precursor proteins, maintaining them in a translocation-competent state. It also specifically binds to its receptor SecA. The protein is Protein-export protein SecB of Methylibium petroleiphilum (strain ATCC BAA-1232 / LMG 22953 / PM1).